We begin with the raw amino-acid sequence, 209 residues long: uncharacterized protein (209 aa).

This is an uncharacterized protein from Arabidopsis thaliana (Mouse-ear cress).